The chain runs to 267 residues: 2-keto-3-deoxy-L-rhamnonate aldolase (267 aa).

Histidine 49 acts as the Proton acceptor in catalysis. Residue glutamine 151 participates in substrate binding. Glutamate 153 lines the Mg(2+) pocket. Residues alanine 178 and aspartate 179 each coordinate substrate. Aspartate 179 lines the Mg(2+) pocket.

It belongs to the HpcH/HpaI aldolase family. KDR aldolase subfamily. In terms of assembly, homohexamer. Requires Mg(2+) as cofactor.

It carries out the reaction 2-dehydro-3-deoxy-L-rhamnonate = (S)-lactaldehyde + pyruvate. Its function is as follows. Catalyzes the reversible retro-aldol cleavage of 2-keto-3-deoxy-L-rhamnonate (KDR) to pyruvate and lactaldehyde. The chain is 2-keto-3-deoxy-L-rhamnonate aldolase from Salmonella agona (strain SL483).